Here is a 772-residue protein sequence, read N- to C-terminus: MNPEERVVTWLISLGVLESPKKTICDPEEFLKSSLKNGVVLCKLISRLLPGSVEKYCQEPQTEADCIDNINDFLKGCATLQVEVFEPDDLYSGANFSKVLNTLLAVNKATEDQLSERPCGRSSSLSATTSSQTNPQAAVPSTTPEQQSEEKAAEMTENGSHQLIVKARFNFKQTNEDELSVCKGDIIYVTRVEEGGWWEGTLNGRTGWFPSNYVREIKPSERPLSPKAVKGFDTAPLTKNYYTVVLQNILDTEKEYAKELQSLLVTYLRPLQSNNNLSTVEFTCLLGNFEEVCTFQQTLCQALEECSKSPENQHKVGGCLLNLMPHFKSMYLAYCANHPSAVNVLTQHSDDLERFMENQGASSPGILILTTSLSKPFMRLEKYVTLLQELERHMEDTHPDHQDILKAIIAFKSLMGQCQDLRKRKQLELQILSEPIQAWEGDDIKTLGNVIFMSQVVMQHGACEEKEERYFLLFSSVLIMLSASPRMSGFMYQGKVPIAGMVVTRLDEIEGNDCTFEITGSTVERIVVHCNNNQDFQEWMEQLNRLTKGPASCSSLSKTSSSSCSTHSSFSSTGQPRGPLEPPQIIKPWSLSCLRPAPPLRPSAALGYKERMSYILKESSKSPKTMKKFLHKRKTERKTSEEEYVIRKSTAALEEDAQILKVIEAYCTSASFQQGTRKDSVPQVLLPEEEKLIIEETRSNGQTIIEEKSLVDTVYALKDEVKELKQENKKMKQCLEEELKSRKDLEKLVRKLLKQTDESIRAESSSKTSILQ.

A Calponin-homology (CH) domain is found at 1-111; the sequence is MNPEERVVTW…TLLAVNKATE (111 aa). The tract at residues 115-158 is disordered; the sequence is SERPCGRSSSLSATTSSQTNPQAAVPSTTPEQQSEEKAAEMTEN. Low complexity predominate over residues 122–133; it reads SSSLSATTSSQT. S126 is modified (phosphoserine). T133 carries the post-translational modification Phosphothreonine. A compositionally biased stretch (polar residues) spans 134–146; sequence NPQAAVPSTTPEQ. An SH3 domain is found at 160-219; sequence SHQLIVKARFNFKQTNEDELSVCKGDIIYVTRVEEGGWWEGTLNGRTGWFPSNYVREIKP. S225 carries the post-translational modification Phosphoserine. The DH domain occupies 241–421; it reads YYTVVLQNIL…KSLMGQCQDL (181 aa). One can recognise a PH domain in the interval 443 to 548; sequence DIKTLGNVIF…WMEQLNRLTK (106 aa). Position 488 is a phosphoserine (S488). A compositionally biased stretch (low complexity) spans 557–573; that stretch reads SKTSSSSCSTHSSFSST. The segment at 557–581 is disordered; sequence SKTSSSSCSTHSSFSSTGQPRGPLE. A phosphoserine mark is found at S640 and S680.

As to quaternary structure, interacts with PAK kinases through the SH3 domain. Interacts with GIT1. Interacts with PARVB. Component of cytoplasmic complexes, which also contain PXN, GIT1 and PAK1. Interacts with BIN2. Identified in a complex with BIN2 and GIT2. Interacts with PARVG; the guanine nucleotide exchange factor activity of ARHGEF6 is essential for PARVG-induced enhancement of cell spreading.

It is found in the cell projection. It localises to the lamellipodium. Acts as a RAC1 guanine nucleotide exchange factor (GEF). The polypeptide is Rho guanine nucleotide exchange factor 6 (Arhgef6) (Rattus norvegicus (Rat)).